We begin with the raw amino-acid sequence, 779 residues long: FAD-dependent monooxygenase BOA8 (779 aa).

FAD is bound by residues glutamate 85, arginine 128, aspartate 331, and alanine 344. Helical transmembrane passes span 471–491 (AQLA…KTPE), 504–524 (VKLD…IWTI), 542–562 (AFLL…YFFF), 587–607 (ILPL…WSSI), 618–638 (NAWY…KFIV), 665–685 (ILIC…SIAF), and 742–762 (LILT…GLIV).

The protein belongs to the paxM FAD-dependent monooxygenase family. Requires FAD as cofactor.

It localises to the membrane. The protein operates within polyketide biosynthesis. Its function is as follows. FAD-dependent monooxygenase; part of the gene cluster B that mediates the biosynthesis of botcinic acid and its botcinin derivatives, acetate-derived polyketides that contribute to virulence when combined with the sesquiterpene botrydial. Botcinic acid and its derivatives have been shown to induce chlorosis and necrosis during host plant infection, but also have antifungal activities. Two polyketide synthases, BOA6 and BOA9, are involved in the biosynthesis of botcinins. BOA6 mediates the formation of the per-methylated tetraketide core by condensation of four units of malonyl-CoA with one unit of acetyl-CoA, which would be methylated in activated methylene groups to yield a bicyclic acid intermediate that could then either be converted to botrylactone derivatives or lose the starter acetate unit through a retro-Claisen type C-C bond cleavage to yield botcinin derivatives. The second polyketide synthase, BOA9, is probably required for the biosynthesis of the tetraketide side chain of botcinins. The methyltransferase (MT) domain within BOA6 is probably responsible for the incorporation of four methyl groups. The trans-enoyl reductase BOA5 might take over the enoyl reductase function of BOA6 that misses an ER domain. The monooxygenases BOA2, BOA3 and BOA4 might be involved in further hydroxylations at C4, C5 and C8, whereas BOA7, close to BOA9, could potentially be involved in the hydroxylation at C4 in the side chain of botcinins. The sequence is that of FAD-dependent monooxygenase BOA8 from Botryotinia fuckeliana (strain B05.10) (Noble rot fungus).